The following is a 319-amino-acid chain: MYSKLNYSHQKGDQALKHPHLVRLQQSEVRGFTDMPNNGASTSSAGSFARQDSLTIAASLQQRDRERHPVDFMETELDLGDYLQVLHDLDVPTDNVDFDDAELQKCNILYDGEHPYEQPELNGYERHVAYGTGYRVPGDYDQDGYKMNCEVKAETPDFGATKTRRAVKRPVPYDDYQKEYSEESSDMTDNDGSVDDSYFEPKSKKTKSAGLENFKPQTRARKYKLKADEEKAEPTYKLKRARNNDAVRKSRKKAKELQDKKEAEHDKMKRRIAELEGLLQSERDARRRDQDTLEQLLRNKGPMKEQRMPQRHILENFNK.

The segment at 53–67 is n' domain; required for axon regeneration; the sequence is SLTIAASLQQRDRER. The tract at residues 163-319 is disordered; the sequence is TRRAVKRPVP…QRHILENFNK (157 aa). Positions 171-181 are enriched in basic and acidic residues; sequence VPYDDYQKEYS. A compositionally biased stretch (acidic residues) spans 182–198; sequence EESSDMTDNDGSVDDSY. Basic and acidic residues-rich tracts occupy residues 225-248, 255-274, 281-291, and 302-319; these read LKAD…DAVR, KELQ…RIAE, SERDARRRDQD, and PMKE…NFNK. One can recognise a bZIP domain in the interval 233–308; the sequence is EPTYKLKRAR…NKGPMKEQRM (76 aa). A basic motif region spans residues 237-271; the sequence is KLKRARNNDAVRKSRKKAKELQDKKEAEHDKMKRR. The segment at 275-308 is leucine-zipper; that stretch reads LEGLLQSERDARRRDQDTLEQLLRNKGPMKEQRM.

The protein belongs to the bZIP family. C/EBP subfamily. May interact with transcription factor ets-4. May interact (via N-terminus) with nipi-3. May interact (via N-terminus) with importin subunit alpha ima-3. Expressed in touch and motor neurons.

Its subcellular location is the synapse. The protein resides in the cytoplasm. The protein localises to the nucleus. It is found in the cell projection. It localises to the axon. Transcription factor. Binds to promoter regions of target genes, perhaps at the motif 5'-[AGCT]TT[AGT][TC]GAAA[ACT]-3'. Modulates expression of genes involved in development and in stress responses, including those regulating the p38/MAPK signaling pathways such as MAPKK sek-1 and phosphatase vhp-1. Involved in innate immunity. Plays a role in repressing the response to infection by the Gram-negative bacterium P.aeruginosa, perhaps acting independently of the pmk-1 or pmk-3 p38/MAPK pathways. However, also plays a protective role in the response to infection by P.aeruginosa. Required in axonal regrowth following injury and synaptogenesis. Following axon injury, in concert with transcription factor ets-4, activates expression of receptor tyrosine kinase svh-2. May function downstream of the Ca2+-activated p38/MAPK pathway to promote axon regeneration. Plays a role in modulating polymerization of neuronal microtubules. Involved in modulating lipid homeostasis. This chain is CCAAT/enhancer-binding protein homolog 1, found in Caenorhabditis elegans.